The chain runs to 371 residues: DNA repair and recombination protein rti1 (371 aa).

Residues 346–371 form a disordered region; sequence IDHNRSMPIRRPSLTSNNSANTFSTK. Positions 358–371 are enriched in polar residues; the sequence is SLTSNNSANTFSTK.

Belongs to the RAD52 family. In terms of assembly, interacts with rph51 and rph54.

Active in the repair of DNA damage and in mating-type switching. Probably involved in the repair of DNA double-strands breaks. Has a role in promoting S phase completion. This is DNA repair and recombination protein rti1 (rti1) from Schizosaccharomyces pombe (strain 972 / ATCC 24843) (Fission yeast).